Consider the following 240-residue polypeptide: Uridylate kinase (240 aa).

13 to 16 (KASG) provides a ligand contact to ATP. The involved in allosteric activation by GTP stretch occupies residues 21–26 (GSQGFG). A UMP-binding site is contributed by Gly55. Gly56 and Arg60 together coordinate ATP. Residues Asp75 and 136-143 (TGNPFFTT) each bind UMP. ATP-binding residues include Thr163, Gln164, Tyr169, and Asp172.

It belongs to the UMP kinase family. In terms of assembly, homohexamer.

It is found in the cytoplasm. It carries out the reaction UMP + ATP = UDP + ADP. It functions in the pathway pyrimidine metabolism; CTP biosynthesis via de novo pathway; UDP from UMP (UMPK route): step 1/1. Allosterically activated by GTP. Inhibited by UTP. In terms of biological role, catalyzes the reversible phosphorylation of UMP to UDP. The polypeptide is Uridylate kinase (Brucella suis biovar 1 (strain 1330)).